Reading from the N-terminus, the 304-residue chain is Elongation factor Ts (304 aa).

The interval 82–85 (TDFV) is involved in Mg(2+) ion dislocation from EF-Tu.

It belongs to the EF-Ts family.

It localises to the cytoplasm. Its function is as follows. Associates with the EF-Tu.GDP complex and induces the exchange of GDP to GTP. It remains bound to the aminoacyl-tRNA.EF-Tu.GTP complex up to the GTP hydrolysis stage on the ribosome. This Symbiobacterium thermophilum (strain DSM 24528 / JCM 14929 / IAM 14863 / T) protein is Elongation factor Ts.